We begin with the raw amino-acid sequence, 694 residues long: MTRTALVTTALPYANGPLHLGHLVGYIQADIWVRARRLRGDKTWFVCADDTHGTPIMLAAEKAGVTPEAFIANVQASHERDFAAFGVTFDHYDSTNSPVNRELTEAFYAKLEAAGHISRRSVAQFYDTAKGMFLPDRYIKGICPNCGSPDQYGDNCEVCGATYAPTELKEPKSVISGATPELRDSEHFFFEVGHFDGFLREWLAGDVALPGVKAKLKEWLDAEGGLRAWDISRDAPYFGFQIPGQPGKYFYVWLDAPIGYLCSFKTLCAQMGENFEAHLVAGTQTELHHFIGKDIVNFHGLFWPAVLHGTGHRAPTRLHVNGYLTVDGAKMSKSRGTFVMARTFLDVGLEPEALRYYFAAKSSGGVDDLDLNLGDFIARVNADLVGKFVNLASRCAGFIGKRFDGKLADALPDAAQYDRFVAALAPIREAYERNDAASAIRQTMALADEANKYIDDTKPWVIAKQDGADAQLQSVCTQGLNLFRILVAALKPILPRTCAEAEAFLSAPMTSWEDVIGPLTAHTIQPYTALFTRIDPKLIDAMTDASKDTLAAPATPATASKPAPAKADAKPAAAANPQSPIATPGFIGMDDFAKLDLRIGKVLACEFVEGSDKLLRFELDAGELGTRQIFSGIRASYREPETLVGRSVVFIANLAPRKMRFGISEGMILSAGFDGGALALLDADSGAQPGMPVR.

Positions 12–22 (PYANGPLHLGH) match the 'HIGH' region motif. Zn(2+) contacts are provided by C143, C146, C156, and C159. The 'KMSKS' region signature appears at 330–334 (KMSKS). K333 is an ATP binding site. Residues 550–577 (LAAPATPATASKPAPAKADAKPAAAANP) are disordered. Residues 551–575 (AAPATPATASKPAPAKADAKPAAAA) show a composition bias toward low complexity. Residues 591–694 (DFAKLDLRIG…SGAQPGMPVR (104 aa)) enclose the tRNA-binding domain.

The protein belongs to the class-I aminoacyl-tRNA synthetase family. MetG type 1 subfamily. In terms of assembly, homodimer. It depends on Zn(2+) as a cofactor.

Its subcellular location is the cytoplasm. The enzyme catalyses tRNA(Met) + L-methionine + ATP = L-methionyl-tRNA(Met) + AMP + diphosphate. In terms of biological role, is required not only for elongation of protein synthesis but also for the initiation of all mRNA translation through initiator tRNA(fMet) aminoacylation. This Xanthomonas axonopodis pv. citri (strain 306) protein is Methionine--tRNA ligase.